The following is a 211-amino-acid chain: Transcriptional regulatory protein RcsA (211 aa).

Residues 135–200 (LDVHPLTLSQ…VIYHVVRLTD (66 aa)) form the HTH luxR-type domain. Residues 159-178 (TIQISDKMQIKAKTVSSHKG) constitute a DNA-binding region (H-T-H motif).

This sequence belongs to the RcsA family.

In terms of biological role, component of the Rcs signaling system, which controls transcription of numerous genes. Binds to DNA to regulate expression of genes. This is Transcriptional regulatory protein RcsA from Pantoea stewartii subsp. stewartii (Erwinia stewartii).